The chain runs to 347 residues: NAD-dependent alcohol dehydrogenase (347 aa).

An N6-methyllysine modification is found at Lys-11. Residues Cys-38, His-68, Glu-98, Cys-101, Cys-104, Cys-112, and Cys-154 each contribute to the Zn(2+) site. At Lys-213 the chain carries N6-methyllysine.

It belongs to the zinc-containing alcohol dehydrogenase family. As to quaternary structure, homodimer and homotetramer. Requires Zn(2+) as cofactor.

It catalyses the reaction a primary alcohol + NAD(+) = an aldehyde + NADH + H(+). The enzyme catalyses a secondary alcohol + NAD(+) = a ketone + NADH + H(+). The protein is NAD-dependent alcohol dehydrogenase (adh) of Sulfurisphaera tokodaii (strain DSM 16993 / JCM 10545 / NBRC 100140 / 7) (Sulfolobus tokodaii).